We begin with the raw amino-acid sequence, 315 residues long: tRNA pseudouridine synthase B (315 aa).

H42 is a substrate binding site. Residue D47 is the Nucleophile of the active site. Substrate is bound by residues Y75, Y178, and L199.

It belongs to the pseudouridine synthase TruB family. Type 1 subfamily.

It carries out the reaction uridine(55) in tRNA = pseudouridine(55) in tRNA. Functionally, responsible for synthesis of pseudouridine from uracil-55 in the psi GC loop of transfer RNAs. The protein is tRNA pseudouridine synthase B of Photorhabdus laumondii subsp. laumondii (strain DSM 15139 / CIP 105565 / TT01) (Photorhabdus luminescens subsp. laumondii).